Here is a 139-residue protein sequence, read N- to C-terminus: Transcription antitermination protein NusB (139 aa).

This sequence belongs to the NusB family.

Its function is as follows. Involved in transcription antitermination. Required for transcription of ribosomal RNA (rRNA) genes. Binds specifically to the boxA antiterminator sequence of the ribosomal RNA (rrn) operons. In Enterobacter sp. (strain 638), this protein is Transcription antitermination protein NusB.